The primary structure comprises 160 residues: Globin CTT-II beta (160 aa).

The N-terminal stretch at 1–15 is a signal peptide; that stretch reads MKFLVLALCIAAAVA. In terms of domain architecture, Globin spans 17–160; sequence PLSADEASLV…NVFNMMFSYL (144 aa). The heme b site is built by histidine 75 and histidine 110.

Belongs to the globin family. Homodimer.

This chain is Globin CTT-II beta, found in Chironomus thummi thummi (Midge).